A 463-amino-acid polypeptide reads, in one-letter code: Na(+)/H(+) antiporter NhaA 3 (463 aa).

Helical transmembrane passes span 28 to 48 (FLAT…AALL), 79 to 99 (LHHW…GLEI), 114 to 134 (IAVP…IYFV), 144 to 164 (GWGI…ALFG), 173 to 193 (LFLL…VGIF), 196 to 216 (DHLN…ILGL), 232 to 252 (LVLW…GVLV), 305 to 325 (VLHP…NAGV), 344 to 364 (VAAA…VAAI), 377 to 397 (YGHL…SLFI), and 413 to 433 (IGIL…LRVL). Positions 444-463 (TDEPVPRLPPRPWRAPVPAK) are disordered. A compositionally biased stretch (pro residues) spans 449-463 (PRLPPRPWRAPVPAK).

This sequence belongs to the NhaA Na(+)/H(+) (TC 2.A.33) antiporter family.

It is found in the cell membrane. The catalysed reaction is Na(+)(in) + 2 H(+)(out) = Na(+)(out) + 2 H(+)(in). In terms of biological role, na(+)/H(+) antiporter that extrudes sodium in exchange for external protons. The chain is Na(+)/H(+) antiporter NhaA 3 from Frankia alni (strain DSM 45986 / CECT 9034 / ACN14a).